Here is a 338-residue protein sequence, read N- to C-terminus: Lipoate-protein ligase A (338 aa).

The BPL/LPL catalytic domain maps to 29-216; sequence PATQRVLFLW…AFFAHYGERV (188 aa). Residues Arg-71, 76 to 79, and Lys-134 each bind ATP; that span reads GAVF. Lys-134 is a binding site for (R)-lipoate.

Belongs to the LplA family. In terms of assembly, monomer.

It is found in the cytoplasm. It carries out the reaction L-lysyl-[lipoyl-carrier protein] + (R)-lipoate + ATP = N(6)-[(R)-lipoyl]-L-lysyl-[lipoyl-carrier protein] + AMP + diphosphate + H(+). It functions in the pathway protein modification; protein lipoylation via exogenous pathway; protein N(6)-(lipoyl)lysine from lipoate: step 1/2. It participates in protein modification; protein lipoylation via exogenous pathway; protein N(6)-(lipoyl)lysine from lipoate: step 2/2. Its function is as follows. Catalyzes both the ATP-dependent activation of exogenously supplied lipoate to lipoyl-AMP and the transfer of the activated lipoyl onto the lipoyl domains of lipoate-dependent enzymes. The protein is Lipoate-protein ligase A of Escherichia coli O6:K15:H31 (strain 536 / UPEC).